Here is a 252-residue protein sequence, read N- to C-terminus: MILHAQAKHGKLGLPWLVFLHGFSGDCHEWQEVGEAFADYSRLYVDLLGHGGSAAISVDGFDDVTDLLRKTLVSYNILDFWLVGYSLGGRVAMMAACQGLAGLCGVIVEGGHPGLQNAEQRAERQRSDRQWAQRFRTEPLTAVFADWYQQPVFASLNDDQRRELVALRSNNNGATLAAMLEATSLAVQPDLRANLSARTFAFYYLCGERDSKFRALAAELAADCHVIPRAGHNAHRENPAGVIASLAQILRF.

This sequence belongs to the AB hydrolase superfamily. MenH family. In terms of assembly, monomer.

It catalyses the reaction 5-enolpyruvoyl-6-hydroxy-2-succinyl-cyclohex-3-ene-1-carboxylate = (1R,6R)-6-hydroxy-2-succinyl-cyclohexa-2,4-diene-1-carboxylate + pyruvate. The protein operates within quinol/quinone metabolism; 1,4-dihydroxy-2-naphthoate biosynthesis; 1,4-dihydroxy-2-naphthoate from chorismate: step 3/7. It functions in the pathway quinol/quinone metabolism; menaquinone biosynthesis. Functionally, catalyzes a proton abstraction reaction that results in 2,5-elimination of pyruvate from 2-succinyl-5-enolpyruvyl-6-hydroxy-3-cyclohexene-1-carboxylate (SEPHCHC) and the formation of 2-succinyl-6-hydroxy-2,4-cyclohexadiene-1-carboxylate (SHCHC). The polypeptide is 2-succinyl-6-hydroxy-2,4-cyclohexadiene-1-carboxylate synthase (Shigella flexneri serotype 5b (strain 8401)).